A 163-amino-acid chain; its full sequence is Nucleotide-binding protein MT0592 (163 aa).

Belongs to the YajQ family.

In terms of biological role, nucleotide-binding protein. The protein is Nucleotide-binding protein MT0592 of Mycobacterium tuberculosis (strain CDC 1551 / Oshkosh).